The following is a 220-amino-acid chain: Carbonic anhydrase (220 aa).

Positions 39, 41, 98, and 101 each coordinate Zn(2+).

Belongs to the beta-class carbonic anhydrase family. Zn(2+) is required as a cofactor.

The catalysed reaction is hydrogencarbonate + H(+) = CO2 + H2O. This chain is Carbonic anhydrase (cynT), found in Pseudomonas aeruginosa (strain ATCC 15692 / DSM 22644 / CIP 104116 / JCM 14847 / LMG 12228 / 1C / PRS 101 / PAO1).